A 426-amino-acid chain; its full sequence is Histidine--tRNA ligase (426 aa).

Belongs to the class-II aminoacyl-tRNA synthetase family. Homodimer.

Its subcellular location is the cytoplasm. The enzyme catalyses tRNA(His) + L-histidine + ATP = L-histidyl-tRNA(His) + AMP + diphosphate + H(+). This Corynebacterium kroppenstedtii (strain DSM 44385 / JCM 11950 / CIP 105744 / CCUG 35717) protein is Histidine--tRNA ligase.